A 303-amino-acid chain; its full sequence is N-acetylmuramic acid 6-phosphate etherase (303 aa).

One can recognise an SIS domain in the interval 60-223; that stretch reads ATASLQAGGR…STGVMVKLGK (164 aa). Glu88 acts as the Proton donor in catalysis. Glu119 is a catalytic residue.

The protein belongs to the GCKR-like family. MurNAc-6-P etherase subfamily. In terms of assembly, homodimer.

The catalysed reaction is N-acetyl-D-muramate 6-phosphate + H2O = N-acetyl-D-glucosamine 6-phosphate + (R)-lactate. Its pathway is amino-sugar metabolism; 1,6-anhydro-N-acetylmuramate degradation. The protein operates within amino-sugar metabolism; N-acetylmuramate degradation. It functions in the pathway cell wall biogenesis; peptidoglycan recycling. Specifically catalyzes the cleavage of the D-lactyl ether substituent of MurNAc 6-phosphate, producing GlcNAc 6-phosphate and D-lactate. Together with AnmK, is also required for the utilization of anhydro-N-acetylmuramic acid (anhMurNAc) either imported from the medium or derived from its own cell wall murein, and thus plays a role in cell wall recycling. The chain is N-acetylmuramic acid 6-phosphate etherase from Pectobacterium atrosepticum (strain SCRI 1043 / ATCC BAA-672) (Erwinia carotovora subsp. atroseptica).